The chain runs to 314 residues: Probable RuBisCO transcriptional regulator (314 aa).

Residues 6-63 enclose the HTH lysR-type domain; it reads FTLDQLKIIKTIHREGSFKTAAKKLYISQPAVSRQVQNLERQLNTPIFYRDKRKARLT. Positions 23 to 42 form a DNA-binding region, H-T-H motif; it reads FKTAAKKLYISQPAVSRQVQ.

Belongs to the LysR transcriptional regulatory family.

The protein resides in the plastid. It is found in the chloroplast. In terms of biological role, trans-acting transcriptional regulator of RuBisCO genes (rbcL and rbcS) expression. The polypeptide is Probable RuBisCO transcriptional regulator (rbcR) (Emiliania huxleyi (Coccolithophore)).